A 215-amino-acid chain; its full sequence is Probable phosphoglycerate mutase GpmB (215 aa).

Residues 8–15 (RHGETQWN), 21–22 (QG), Arg-58, Arg-60, 82–85 (ELNM), 104–105 (RR), and 151–152 (GI) contribute to the substrate site. His-9 acts as the Tele-phosphohistidine intermediate in catalysis. Glu-82 serves as the catalytic Proton donor/acceptor.

Belongs to the phosphoglycerate mutase family. GpmB subfamily.

It catalyses the reaction (2R)-2-phosphoglycerate = (2R)-3-phosphoglycerate. It functions in the pathway carbohydrate degradation; glycolysis; pyruvate from D-glyceraldehyde 3-phosphate: step 3/5. The protein is Probable phosphoglycerate mutase GpmB of Shigella boydii serotype 18 (strain CDC 3083-94 / BS512).